Consider the following 1098-residue polypeptide: Paired amphipathic helix protein Sin3b (1098 aa).

A compositionally biased stretch (gly residues) spans 1 to 25 (MAHAGSGGSAGRGFGGSRWGRSGSG). The tract at residues 1–26 (MAHAGSGGSAGRGFGGSRWGRSGSGG) is disordered. The interaction with CRY1 stretch occupies residues 1-299 (MAHAGSGGSA…VGKYGTLQEF (299 aa)). PAH domains lie at 30–100 (LPVH…LPLG) and 145–230 (VPLE…LPEA). The interaction with REST stretch occupies residues 52-98 (PATYNGFLEIMKEFKSQSIDTPGVIRRVSQLFHEHPDLIVGFNAFLP). Residues 238–247 (NGSCEMNSGQ) show a composition bias toward polar residues. The disordered stretch occupies residues 238 to 274 (NGSCEMNSGQKNEEKSLEHNKKRSRPSLLRPVSAPAK). The interval 275-499 (KKMKLRGTKD…CLGGTSEVIQ (225 aa)) is interaction with NCOR1. One can recognise a PAH 3 domain in the interval 283 to 360 (KDLSIAAVGK…AQFKSFLGVK (78 aa)). Residues 383 to 550 (ASCKRIGSSY…REAQQGFNKI (168 aa)) form an interaction with SUDS3 and HDAC1 region. Residues 661–702 (QQCPGTSDDSADERDRDRDSAEPERRRPTDEKPPADASPEPP) are disordered. Residues Ser667 and Ser670 each carry the phosphoserine modification. A compositionally biased stretch (basic and acidic residues) spans 673–694 (ERDRDRDSAEPERRRPTDEKPP).

As to quaternary structure, component of the SIN3B complex, which includes SIN3B, HDAC2 or HDAC1, PHF12 and MORF4L1. Interacts with FOXK1/MNF, MXI, MAD, NCOR1 and SAP30. Interaction with SUDS3 enhances the interaction with HDAC1 to form a complex. Interacts with CRY1, HCFC1, MAD3, MAD4, MAEL, REST, RNF220 and SETDB1. Interacts with C6orf89. Interacts with MYT1L. In terms of processing, ubiquitinated by RNF220 that leads to proteasomal degradation.

It localises to the nucleus. Its function is as follows. Acts as a transcriptional repressor. Interacts with MXI1 to repress MYC responsive genes and antagonize MYC oncogenic activities. Interacts with MAD-MAX heterodimers by binding to MAD. The heterodimer then represses transcription by tethering SIN3B to DNA. Also forms a complex with FOXK1 which represses transcription. With FOXK1, regulates cell cycle progression probably by repressing cell cycle inhibitor genes expression. As part of the SIN3B complex represses transcription and counteracts the histone acetyltransferase activity of EP300 through the recognition H3K27ac marks by PHF12 and the activity of the histone deacetylase HDAC2. SIN3B complex is recruited downstream of the constitutively active genes transcriptional start sites through interaction with histones and mitigates histone acetylation and RNA polymerase II progression within transcribed regions contributing to the regulation of transcription. This chain is Paired amphipathic helix protein Sin3b (Sin3b), found in Mus musculus (Mouse).